A 63-amino-acid chain; its full sequence is Large ribosomal subunit protein bL35 (63 aa).

It belongs to the bacterial ribosomal protein bL35 family.

This chain is Large ribosomal subunit protein bL35, found in Thermobifida fusca (strain YX).